The sequence spans 430 residues: Enolase (430 aa).

Q167 provides a ligand contact to (2R)-2-phosphoglycerate. The active-site Proton donor is the E209. Mg(2+) contacts are provided by D246, E287, and D314. Residues K339, R368, S369, and K390 each coordinate (2R)-2-phosphoglycerate. The Proton acceptor role is filled by K339.

Belongs to the enolase family. Mg(2+) serves as cofactor.

The protein resides in the cytoplasm. It localises to the secreted. It is found in the cell surface. The enzyme catalyses (2R)-2-phosphoglycerate = phosphoenolpyruvate + H2O. Its pathway is carbohydrate degradation; glycolysis; pyruvate from D-glyceraldehyde 3-phosphate: step 4/5. Functionally, catalyzes the reversible conversion of 2-phosphoglycerate (2-PG) into phosphoenolpyruvate (PEP). It is essential for the degradation of carbohydrates via glycolysis. This Prochlorococcus marinus (strain MIT 9215) protein is Enolase.